Here is a 201-residue protein sequence, read N- to C-terminus: Large ribosomal subunit protein uL4 (201 aa).

The interval 44–71 is disordered; sequence RAQKTRAEVSGSGKKPWRQKGTGRARSG.

The protein belongs to the universal ribosomal protein uL4 family. As to quaternary structure, part of the 50S ribosomal subunit.

Functionally, one of the primary rRNA binding proteins, this protein initially binds near the 5'-end of the 23S rRNA. It is important during the early stages of 50S assembly. It makes multiple contacts with different domains of the 23S rRNA in the assembled 50S subunit and ribosome. Forms part of the polypeptide exit tunnel. This Photorhabdus laumondii subsp. laumondii (strain DSM 15139 / CIP 105565 / TT01) (Photorhabdus luminescens subsp. laumondii) protein is Large ribosomal subunit protein uL4.